Reading from the N-terminus, the 227-residue chain is 2-C-methyl-D-erythritol 4-phosphate cytidylyltransferase (227 aa).

Belongs to the IspD/TarI cytidylyltransferase family. IspD subfamily.

The catalysed reaction is 2-C-methyl-D-erythritol 4-phosphate + CTP + H(+) = 4-CDP-2-C-methyl-D-erythritol + diphosphate. It functions in the pathway isoprenoid biosynthesis; isopentenyl diphosphate biosynthesis via DXP pathway; isopentenyl diphosphate from 1-deoxy-D-xylulose 5-phosphate: step 2/6. Its function is as follows. Catalyzes the formation of 4-diphosphocytidyl-2-C-methyl-D-erythritol from CTP and 2-C-methyl-D-erythritol 4-phosphate (MEP). This Petrotoga mobilis (strain DSM 10674 / SJ95) protein is 2-C-methyl-D-erythritol 4-phosphate cytidylyltransferase.